The chain runs to 180 residues: ATP synthase subunit delta (180 aa).

It belongs to the ATPase delta chain family. As to quaternary structure, F-type ATPases have 2 components, F(1) - the catalytic core - and F(0) - the membrane proton channel. F(1) has five subunits: alpha(3), beta(3), gamma(1), delta(1), epsilon(1). F(0) has three main subunits: a(1), b(2) and c(10-14). The alpha and beta chains form an alternating ring which encloses part of the gamma chain. F(1) is attached to F(0) by a central stalk formed by the gamma and epsilon chains, while a peripheral stalk is formed by the delta and b chains.

The protein localises to the cell membrane. Functionally, f(1)F(0) ATP synthase produces ATP from ADP in the presence of a proton or sodium gradient. F-type ATPases consist of two structural domains, F(1) containing the extramembraneous catalytic core and F(0) containing the membrane proton channel, linked together by a central stalk and a peripheral stalk. During catalysis, ATP synthesis in the catalytic domain of F(1) is coupled via a rotary mechanism of the central stalk subunits to proton translocation. This protein is part of the stalk that links CF(0) to CF(1). It either transmits conformational changes from CF(0) to CF(1) or is implicated in proton conduction. The chain is ATP synthase subunit delta from Enterococcus faecalis (strain ATCC 700802 / V583).